The primary structure comprises 1079 residues: MEQQQQKSAAHVSKLFVCTAVDCKDEIEEKFERSYVSLQQQIAGLSDKEMHDMLTQIVCKEKQHEEISIGFLYIILTDPAMAPKTYRDITLVSRDGMNVIVANLTLLVAEKYAKLTETARRQLIWVLREFVKHQVLSVENVIWNCLRQAGGGDVSHKNLFLVESLLDIFIEYRAWLEAIPFLVQSSVYSFVRLIEDHANPALMPLRQKEVKFTISLIRDRFQDIIPLGRDFVRLLQNVARIPEFELLWRDILCNPKSLHPTFNGIWHLLQIRTSRRFLQCRLLPEMERKLHFLASSVKFGNQKRYQDWFQDKYFATPESHSLRSDLIRFIINVIHPTNDMLCSDIIPRWAIIGWLISSCTNPIASANAKLSLFYDWLFFDPAKDNIMNIEPGILVMYHSIRNHPFVSSTLLDFLCRITKNFYIKNEDKIRLGVYNSLKLILDKQVIPNLHPLFESPKLDRELRNLIRENFREFVSPVANMPQSIYPATHSIQAPIFKKEADQRMLQSENIDVGSGAFAANSGTISLVDDDNKIAITPVESSERETEAVFSDDDGENIARCNKNDENTDDDDDLPLSKVRLKEKPVPEKVELPDAIAESFEIFVTKRNSFTWEAFLKDFRTLPASTLDETQLNYVISNTVLILRETLPQQNVFSESKTEEKYLAKSISYPLYGLFRFLYENEDKSKKPFQTLLSEICERLSETGYLLLYFMKIHCKLQTRKNAQQSYQFKTTVYRQICEATDEKIGICLVRDLDLLEKENTTIYLWLLPDIYREFKTIAINNTDLLRITLRCVDAKNVRDIMYSIAQGKLTIFKQDGLIDCIRESLEYETYEQFCLWQLIQAHDVPLKCIQDILPELEAANHPEALSHLLLLLKNEEPTSEIIRLLLSREAKTRGDPFVTSALRFWCQRCEEKLSEIIASLLTSKYPSSSPNKRKRPSKGSSAASSTPSADHVLNHLEHYRRSCRHGTGTGLYVHDMMQRALQSAYSHSNESTKKQFSDLFALAAEDETTAVGRRGGSGRGRKQPVGKKDSNNHNAGSKKNSDVVKTIYSSDENSSEEDWSKHKITQAAKKRKKAINDSD.

3 disordered regions span residues Glu-539 to Pro-574, Tyr-925 to Ala-949, and Ala-1010 to Asp-1079. Residues Lys-938 to Ala-949 show a composition bias toward low complexity. A phosphoserine mark is found at Ser-1049, Ser-1050, Ser-1054, and Ser-1055. The segment covering His-1062 to Lys-1073 has biased composition (basic residues).

The protein belongs to the Integrator subunit 3 family. As to quaternary structure, belongs to the multiprotein complex Integrator, at least composed of IntS1, IntS2, IntS3, IntS4, omd/IntS5, IntS6, defl/IntS7, IntS8, IntS9, IntS10, IntS11, IntS12, asun/IntS13, IntS14 and IntS15. The core complex associates with protein phosphatase 2A subunits mts/PP2A and Pp2A-29B, to form the Integrator-PP2A (INTAC) complex.

Its subcellular location is the nucleus. The protein localises to the cytoplasm. Its function is as follows. Component of the integrator complex, a multiprotein complex that terminates RNA polymerase II (Pol II) transcription in the promoter-proximal region of genes. The integrator complex provides a quality checkpoint during transcription elongation by driving premature transcription termination of transcripts that are unfavorably configured for transcriptional elongation: the complex terminates transcription by (1) catalyzing dephosphorylation of the C-terminal domain (CTD) of Pol II subunit Polr2A/Rbp1 and Spt5, and (2) degrading the exiting nascent RNA transcript via endonuclease activity. The integrator complex is also involved in the 3'-end processing of the U7 snRNA, and also the spliceosomal snRNAs U1, U2, U4 and U5. The chain is Integrator complex subunit 3 homolog (IntS3) from Drosophila virilis (Fruit fly).